We begin with the raw amino-acid sequence, 447 residues long: GTPase Der (447 aa).

EngA-type G domains lie at 4–165 and 180–357; these read KIIA…PEEE and LQIV…KIWN. Residues 10–17, 57–61, 119–122, 186–193, 233–237, and 298–301 each bind GTP; these read GRPNVGKS, DTPGL, NKCE, GRPNAGKS, DTAGL, and NKWD. The region spanning 358–443 is the KH-like domain; it reads KKIATSKLNE…PIRFTYVKTK (86 aa).

It belongs to the TRAFAC class TrmE-Era-EngA-EngB-Septin-like GTPase superfamily. EngA (Der) GTPase family. Associates with the 50S ribosomal subunit.

Its function is as follows. GTPase that plays an essential role in the late steps of ribosome biogenesis. The polypeptide is GTPase Der (Rickettsia akari (strain Hartford)).